The chain runs to 240 residues: Tetraspanin-1 (240 aa).

At 1–9 (MQCFSFIKT) the chain is on the cytoplasmic side. The helical transmembrane segment at 10-30 (IMILFNLLIFLCGAALLAVGI) threads the bilayer. At 31 to 52 (WVSIDGASFLKIFGPLSSSAMQ) the chain is on the extracellular side. The chain crosses the membrane as a helical span at residues 53–73 (FVNVGYFLIAAGAVVFALGFL). The Cytoplasmic portion of the chain corresponds to 74 to 88 (GCYGAQTESKCALMT). The chain crosses the membrane as a helical span at residues 89-109 (FFFILLLIFIAEVAAAVVALV). Topologically, residues 110 to 210 (YTTMAEHFLT…QQLLYDIRTN (101 aa)) are extracellular. Asparagine 154 carries an N-linked (GlcNAc...) asparagine glycan. A helical transmembrane segment spans residues 211-231 (AVTVGGVAAGIGGLELAAMIV). The Cytoplasmic portion of the chain corresponds to 232 to 240 (SMYLYCNLQ).

This sequence belongs to the tetraspanin (TM4SF) family. In terms of assembly, interacts with SLC19A2. Interacts with NTRK1/TRKA.

It is found in the lysosome membrane. Its function is as follows. Structural component of specialized membrane microdomains known as tetraspanin-enriched microdomains (TERMs), which act as platforms for receptor clustering and signaling. Participates thereby in diverse biological functions such as cell signal transduction, adhesion, migration and protein trafficking. Regulates neuronal differentiation in response to NGF by facilitating NGF-mediated activation of NTRK1/TRKA receptor tyrosine kinase and subsequent downstream signaling pathways. Plays a role in the inhibition of TNFalpha-induced apoptosis. Mechanistically, inhibits the NF-kappa-B signaling pathway by blocking phosphorylation of CHUK. Also promotes the stability of the thiamine transporter 1/SLC19A2 in intestinal epithelial cells leading to an increase of thiamine uptake process. This chain is Tetraspanin-1 (TSPAN1), found in Macaca fascicularis (Crab-eating macaque).